Here is an 82-residue protein sequence, read N- to C-terminus: Small ribosomal subunit protein bS16 (82 aa).

It belongs to the bacterial ribosomal protein bS16 family.

The polypeptide is Small ribosomal subunit protein bS16 (Dehalococcoides mccartyi (strain ATCC BAA-2266 / KCTC 15142 / 195) (Dehalococcoides ethenogenes (strain 195))).